Consider the following 432-residue polypeptide: Glutamate-1-semialdehyde 2,1-aminomutase (432 aa).

The residue at position 266 (lysine 266) is an N6-(pyridoxal phosphate)lysine.

This sequence belongs to the class-III pyridoxal-phosphate-dependent aminotransferase family. HemL subfamily. Homodimer. Pyridoxal 5'-phosphate is required as a cofactor.

It is found in the cytoplasm. The catalysed reaction is (S)-4-amino-5-oxopentanoate = 5-aminolevulinate. It functions in the pathway porphyrin-containing compound metabolism; protoporphyrin-IX biosynthesis; 5-aminolevulinate from L-glutamyl-tRNA(Glu): step 2/2. The sequence is that of Glutamate-1-semialdehyde 2,1-aminomutase from Janthinobacterium sp. (strain Marseille) (Minibacterium massiliensis).